The following is a 405-amino-acid chain: Serine/threonine transporter SstT (405 aa).

Transmembrane regions (helical) follow at residues 13–33, 43–63, 82–102, 141–161, 185–205, 217–237, 298–318, and 339–359; these read GGSL…LAGF, FLGD…VFVL, IILL…LMSF, ALIN…GIAL, FVIC…IAQT, LGVL…LIVF, MAGA…TLGI, and ASGV…LFGI.

This sequence belongs to the dicarboxylate/amino acid:cation symporter (DAACS) (TC 2.A.23) family.

The protein localises to the cell inner membrane. The enzyme catalyses L-serine(in) + Na(+)(in) = L-serine(out) + Na(+)(out). The catalysed reaction is L-threonine(in) + Na(+)(in) = L-threonine(out) + Na(+)(out). In terms of biological role, involved in the import of serine and threonine into the cell, with the concomitant import of sodium (symport system). The protein is Serine/threonine transporter SstT of Shewanella amazonensis (strain ATCC BAA-1098 / SB2B).